Reading from the N-terminus, the 1720-residue chain is DNA-directed RNA polymerase I subunit RPA1 (1720 aa).

Zn(2+)-binding residues include Cys-64, Cys-67, Cys-74, His-77, Cys-104, and Cys-107. The segment at 110-201 is clamp; that stretch reads LTCPRAVIHL…IALFWKAHMN (92 aa). Zn(2+) is bound by residues Cys-205 and Cys-208. Ser-240 bears the Phosphoserine mark. The interval 320-426 is clamp; the sequence is FTNGQTVNLQ…IRQILEKKEG (107 aa). A rudder region spans residues 403 to 416; sequence DSEMDKLMMDKYPG. Lys-424, Arg-429, and Arg-436 together coordinate DNA. Positions 468 to 542 are involved in RRN3 binding to Pol I complex; sequence YPQPVTPWNV…QGTKIVCRHV (75 aa). Arg-552 provides a ligand contact to RNA. Positions 588, 590, and 592 each coordinate Mg(2+). Residue Asp-592 participates in RNA binding. The interval 805–883 is funnel; that stretch reads KPKADVKRQR…NEINKACMPF (79 aa). The tract at residues 960–1001 is bridging helix; that stretch reads KPPEFFFHCMAGREGLVDTAVKTSRSGYLQRCIIKHLEGLVV. The interval 1060-1155 is mediates the interaction with TOP2A; it reads ADPKKALHHF…SLSVWRPDIY (96 aa). Residues 1207–1248 are trigger loop; sequence PGEAVGLLAAQSIGEPSTQMTLNTFHFAGRGEMNVTLGIPRL. Arg-1249 contributes to the DNA binding site. Residues 1365–1498 form a disordered region; it reads RNVNTRRATQ…SQEPQGPEAM (134 aa). The span at 1373–1390 shows a compositional bias: basic and acidic residues; that stretch reads TQRDLDNAGELGRSRGEQ. Ser-1386 is subject to Phosphoserine. 2 stretches are compositionally biased toward acidic residues: residues 1391–1412 and 1422–1446; these read EGDEEEEGHIVDAEAEEGDADA and EEEVDYESEEEEEREGEENDDEDMQ. Over residues 1447 to 1461 the composition is skewed to basic and acidic residues; it reads EERNPHREGARKTQE. Positions 1462–1474 are enriched in acidic residues; it reads QDEEVGLGTEEDP.

Belongs to the RNA polymerase beta' chain family. In terms of assembly, component of the RNA polymerase I (Pol I) complex consisting of 13 subunits: a ten-subunit catalytic core composed of POLR1A/RPA1, POLR1B/RPA2, POLR1C/RPAC1, POLR1D/RPAC2, POLR1H/RPA12, POLR2E/RPABC1, POLR2F/RPABC2, POLR2H/RPABC3, POLR2K/RPABC4 and POLR2L/RPABC5; a mobile stalk subunit POLR1F/RPA43 protruding from the core and additional subunits homologous to general transcription factors POLR1E/RPA49 and POLR1G/RPA34. Part of Pol I pre-initiation complex (PIC), in which Pol I core assembles with RRN3 and promoter-bound UTBF and SL1/TIF-IB complex. Interacts (via dock II domain) with TOP2A; this interaction may assist Pol I transcription initiation by releasing supercoils occurring during DNA unwinding. Interacts with CAVIN1; this interaction induces the dissociation of Pol I complex paused at rDNA terminator sequences. Interacts with MYO1C. Interacts with ERBB2. Interacts with DDX11. Interacts with RECQL5. Mg(2+) serves as cofactor.

It is found in the nucleus. It localises to the nucleolus. Its subcellular location is the chromosome. It carries out the reaction RNA(n) + a ribonucleoside 5'-triphosphate = RNA(n+1) + diphosphate. In terms of biological role, catalytic core component of RNA polymerase I (Pol I), a DNA-dependent RNA polymerase which synthesizes ribosomal RNA precursors using the four ribonucleoside triphosphates as substrates. Transcribes 47S pre-rRNAs from multicopy rRNA gene clusters, giving rise to 5.8S, 18S and 28S ribosomal RNAs. Pol I-mediated transcription cycle proceeds through transcription initiation, transcription elongation and transcription termination stages. During transcription initiation, Pol I pre-initiation complex (PIC) is recruited by the selectivity factor 1 (SL1/TIF-IB) complex bound to the core promoter that precedes an rDNA repeat unit. The PIC assembly bends the promoter favoring the formation of the transcription bubble and promoter escape. Once the polymerase has escaped from the promoter it enters the elongation phase during which RNA is actively polymerized, based on complementarity with the template DNA strand. Highly processive, assembles in structures referred to as 'Miller trees' where many elongating Pol I complexes queue and transcribe the same rDNA coding regions. At terminator sequences downstream of the rDNA gene, PTRF interacts with Pol I and halts Pol I transcription leading to the release of the RNA transcript and polymerase from the DNA. Forms Pol I active center together with the second largest subunit POLR1B/RPA2. Appends one nucleotide at a time to the 3' end of the nascent RNA, with POLR1A/RPA1 contributing a Mg(2+)-coordinating DxDGD motif, and POLR1B/RPA2 participating in the coordination of a second Mg(2+) ion and providing lysine residues believed to facilitate Watson-Crick base pairing between the incoming nucleotide and the template base. Typically, Mg(2+) ions direct a 5' nucleoside triphosphate to form a phosphodiester bond with the 3' hydroxyl of the preceding nucleotide of the nascent RNA, with the elimination of pyrophosphate. Has proofreading activity: Pauses and backtracks to allow the cleavage of a missincorporated nucleotide via POLR1H/RPA12. High Pol I processivity is associated with decreased transcription fidelity. This is DNA-directed RNA polymerase I subunit RPA1 from Homo sapiens (Human).